The chain runs to 245 residues: Large ribosomal subunit protein uL3 (245 aa).

Gln-152 carries the N5-methylglutamine modification. A disordered region spans residues 224–245; it reads RSKAVQAEAAAPAEAAAPEGDN. Low complexity predominate over residues 230-245; the sequence is AEAAAPAEAAAPEGDN.

It belongs to the universal ribosomal protein uL3 family. As to quaternary structure, part of the 50S ribosomal subunit. Forms a cluster with proteins L14 and L19. In terms of processing, methylated by PrmB.

Its function is as follows. One of the primary rRNA binding proteins, it binds directly near the 3'-end of the 23S rRNA, where it nucleates assembly of the 50S subunit. The chain is Large ribosomal subunit protein uL3 from Paracoccus denitrificans (strain Pd 1222).